A 423-amino-acid chain; its full sequence is Serine--tRNA ligase (423 aa).

Residue 231 to 233 participates in L-serine binding; that stretch reads TAE. 262–264 contacts ATP; that stretch reads RSE. Glu-285 serves as a coordination point for L-serine. 349 to 352 lines the ATP pocket; it reads EISS. Position 384 (Ser-384) interacts with L-serine.

Belongs to the class-II aminoacyl-tRNA synthetase family. Type-1 seryl-tRNA synthetase subfamily. In terms of assembly, homodimer. The tRNA molecule binds across the dimer.

The protein localises to the cytoplasm. The catalysed reaction is tRNA(Ser) + L-serine + ATP = L-seryl-tRNA(Ser) + AMP + diphosphate + H(+). The enzyme catalyses tRNA(Sec) + L-serine + ATP = L-seryl-tRNA(Sec) + AMP + diphosphate + H(+). It participates in aminoacyl-tRNA biosynthesis; selenocysteinyl-tRNA(Sec) biosynthesis; L-seryl-tRNA(Sec) from L-serine and tRNA(Sec): step 1/1. Functionally, catalyzes the attachment of serine to tRNA(Ser). Is also able to aminoacylate tRNA(Sec) with serine, to form the misacylated tRNA L-seryl-tRNA(Sec), which will be further converted into selenocysteinyl-tRNA(Sec). This chain is Serine--tRNA ligase, found in Lactococcus lactis subsp. lactis (strain IL1403) (Streptococcus lactis).